Reading from the N-terminus, the 332-residue chain is Chorismate synthase (332 aa).

Arginine 46 provides a ligand contact to NADP(+). FMN is bound by residues 123 to 125 (HFS), glycine 253, 268 to 272 (KPTSS), and arginine 295.

This sequence belongs to the chorismate synthase family. Homotetramer. It depends on FMNH2 as a cofactor.

It catalyses the reaction 5-O-(1-carboxyvinyl)-3-phosphoshikimate = chorismate + phosphate. It participates in metabolic intermediate biosynthesis; chorismate biosynthesis; chorismate from D-erythrose 4-phosphate and phosphoenolpyruvate: step 7/7. Functionally, catalyzes the anti-1,4-elimination of the C-3 phosphate and the C-6 proR hydrogen from 5-enolpyruvylshikimate-3-phosphate (EPSP) to yield chorismate, which is the branch point compound that serves as the starting substrate for the three terminal pathways of aromatic amino acid biosynthesis. This reaction introduces a second double bond into the aromatic ring system. The polypeptide is Chorismate synthase (Chitinophaga pinensis (strain ATCC 43595 / DSM 2588 / LMG 13176 / NBRC 15968 / NCIMB 11800 / UQM 2034)).